The chain runs to 1139 residues: Protein lin-25 (1139 aa).

The Nuclear localization signal motif lies at 695 to 701; sequence IKKKKDP.

In terms of tissue distribution, expressed in seam cells and all six vulva precursor cells (VPC). After VPC division, expression is restricted to descendants of the VPC cell lineages P5.p, P6.p and P7.p (at protein level).

Its subcellular location is the nucleus. It is found in the cytoplasm. In terms of biological role, participates in the inductive signaling pathway downstream of let-60 Ras and the RAF/MAP kinase cascade to regulate specification and differentiation of many cell types. Positively regulates the fate of vulval precursor cells. Required for induction of the P12 and excretory duct cell fates. In males, it is also required for proper formation of spicules. Does not function in the signaling pathway that promotes exit from pachytene. Plays a role in responses to M.nematophilum-mediated bacterial infection by promoting tail swelling and preventing constipation. This Caenorhabditis elegans protein is Protein lin-25 (lin-25).